A 101-amino-acid chain; its full sequence is MLHTAFISNILANYLGAMSVILPNILTVTGDIKYIGAGLASVGILGTGVGQGLIGQGACLAIGRNPEMASKVTSTMIVSAGISESGAIYSLVIAILLIFVV.

2 helical membrane-spanning segments follow: residues 35–55 (IGAG…GLIG) and 81–101 (GISE…IFVV).

This sequence belongs to the ATPase C chain family. In terms of assembly, F-type ATPases have 2 components, F(1) - the catalytic core - and F(0) - the membrane proton channel. F(1) has five subunits: alpha(3), beta(3), gamma(1), delta(1), epsilon(1). F(0) has three main subunits: a(1), b(2) and c(10-14). The alpha and beta chains form an alternating ring which encloses part of the gamma chain. F(1) is attached to F(0) by a central stalk formed by the gamma and epsilon chains, while a peripheral stalk is formed by the delta and b chains.

The protein resides in the cell membrane. In terms of biological role, f(1)F(0) ATP synthase produces ATP from ADP in the presence of a proton or sodium gradient. F-type ATPases consist of two structural domains, F(1) containing the extramembraneous catalytic core and F(0) containing the membrane proton channel, linked together by a central stalk and a peripheral stalk. During catalysis, ATP synthesis in the catalytic domain of F(1) is coupled via a rotary mechanism of the central stalk subunits to proton translocation. Functionally, key component of the F(0) channel; it plays a direct role in translocation across the membrane. A homomeric c-ring of between 10-14 subunits forms the central stalk rotor element with the F(1) delta and epsilon subunits. The protein is ATP synthase subunit c of Mycoplasma capricolum subsp. capricolum (strain California kid / ATCC 27343 / NCTC 10154).